A 306-amino-acid polypeptide reads, in one-letter code: Follistatin-related protein 1 (306 aa).

The N-terminal stretch at 1 to 18 (MWKRWLALALVAVAWVRA) is a signal peptide. A Follistatin-like domain is found at 28-51 (ICANVFCGAGRECAVTEKGEPTCL). Disulfide bonds link C29–C40, C34–C50, C52–C82, C56–C75, and C64–C96. The Kazal-like domain occupies 46–98 (GEPTCLCIEQCKPHKRPVCGSNGKTYLNHCELHRDACLTGSKIQVDYDGHCKE). N142 carries an N-linked (GlcNAc...) asparagine glycan. Residues 142-176 (NYSEILDKYFKNFDNGDSRLDSSEFLKFVEQNETA) form the EF-hand 1 domain. The residue at position 163 (S163) is a Phosphoserine. Residues N173 and N178 are each glycosylated (N-linked (GlcNAc...) asparagine). The 36-residue stretch at 191–226 (LRGLCVDALIELSDENADWKLSFQEFLKCLNPSFNP) folds into the EF-hand 2 domain. Residues 231-285 (CALEDETYADGAETEVDCNRCVCACGNWVCTAMTCDGKNQKGAQTQTEEEMTRYV) enclose the VWFC domain.

As to quaternary structure, homodimer. Interacts with SCN10A. Interacts with DIP2A; DIP2A may act as a cell surface receptor for FSTL1. Interacts with BMP4. Interacts with CD14; this interaction promotes TL4-mediated signaling cascade.

The protein resides in the secreted. Its function is as follows. Secreted glycoprotein that is involved in various physiological processes, such as angiogenesis, regulation of the immune response, cell proliferation and differentiation. Plays a role in the development of the central nervous system, skeletal system, lungs, and ureter. Promotes endothelial cell survival, migration and differentiation into network structures in an AKT-dependent manner. Also promotes survival of cardiac myocytes. Initiates various signaling cascades by activating different receptors on the cell surface such as DIP2A, TLR4 or BMP receptors. The protein is Follistatin-related protein 1 (FSTL1) of Pongo abelii (Sumatran orangutan).